The chain runs to 264 residues: S-adenosylmethionine decarboxylase proenzyme (264 aa).

Ser113 serves as the catalytic Schiff-base intermediate with substrate; via pyruvic acid. The residue at position 113 (Ser113) is a Pyruvic acid (Ser); by autocatalysis. The Proton acceptor; for processing activity role is filled by His118. Catalysis depends on Cys141, which acts as the Proton donor; for catalytic activity.

The protein belongs to the prokaryotic AdoMetDC family. Type 2 subfamily. As to quaternary structure, heterooctamer of four alpha and four beta chains arranged as a tetramer of alpha/beta heterodimers. Pyruvate is required as a cofactor. Post-translationally, is synthesized initially as an inactive proenzyme. Formation of the active enzyme involves a self-maturation process in which the active site pyruvoyl group is generated from an internal serine residue via an autocatalytic post-translational modification. Two non-identical subunits are generated from the proenzyme in this reaction, and the pyruvate is formed at the N-terminus of the alpha chain, which is derived from the carboxyl end of the proenzyme. The post-translation cleavage follows an unusual pathway, termed non-hydrolytic serinolysis, in which the side chain hydroxyl group of the serine supplies its oxygen atom to form the C-terminus of the beta chain, while the remainder of the serine residue undergoes an oxidative deamination to produce ammonia and the pyruvoyl group blocking the N-terminus of the alpha chain.

It catalyses the reaction S-adenosyl-L-methionine + H(+) = S-adenosyl 3-(methylsulfanyl)propylamine + CO2. The protein operates within amine and polyamine biosynthesis; S-adenosylmethioninamine biosynthesis; S-adenosylmethioninamine from S-adenosyl-L-methionine: step 1/1. Its function is as follows. Catalyzes the decarboxylation of S-adenosylmethionine to S-adenosylmethioninamine (dcAdoMet), the propylamine donor required for the synthesis of the polyamines spermine and spermidine from the diamine putrescine. This is S-adenosylmethionine decarboxylase proenzyme from Hahella chejuensis (strain KCTC 2396).